Reading from the N-terminus, the 694-residue chain is Elongation factor G (694 aa).

The tr-type G domain maps to 9–288 (SKIRNIGIMA…VIVKWLPSPK (280 aa)). GTP-binding positions include 18–25 (AHIDAGKT), 82–86 (DTPGH), and 136–139 (NKMD).

It belongs to the TRAFAC class translation factor GTPase superfamily. Classic translation factor GTPase family. EF-G/EF-2 subfamily.

The protein resides in the cytoplasm. Catalyzes the GTP-dependent ribosomal translocation step during translation elongation. During this step, the ribosome changes from the pre-translocational (PRE) to the post-translocational (POST) state as the newly formed A-site-bound peptidyl-tRNA and P-site-bound deacylated tRNA move to the P and E sites, respectively. Catalyzes the coordinated movement of the two tRNA molecules, the mRNA and conformational changes in the ribosome. This chain is Elongation factor G, found in Chlamydia abortus (strain DSM 27085 / S26/3) (Chlamydophila abortus).